Consider the following 273-residue polypeptide: Petrobactin import ATP-binding protein FpuD (273 aa).

The region spanning 5 to 241 is the ABC transporter domain; it reads LETKRLTLSY…KLVRDVFRME (237 aa). An ATP-binding site is contributed by 37-44; the sequence is GSNGCGKS.

It belongs to the ABC transporter superfamily. In terms of assembly, the complex is composed of two ATP-binding proteins (FpuD), two transmembrane proteins (FpuB) and a solute-binding protein (FpuA).

Its subcellular location is the cell membrane. The enzyme catalyses a Fe(III)-siderophore(out) + ATP + H2O = a Fe(III)-siderophore(in) + ADP + phosphate + H(+). Part of an ABC transporter complex involved in ferric-petrobactin uptake. Probably responsible for energy coupling to the transport system. The chain is Petrobactin import ATP-binding protein FpuD from Bacillus anthracis.